Consider the following 363-residue polypeptide: Phosphoserine aminotransferase (363 aa).

Arg-41 contacts L-glutamate. Residues 75–76 (AS), Trp-100, Thr-155, Asp-175, and Gln-198 each bind pyridoxal 5'-phosphate. An N6-(pyridoxal phosphate)lysine modification is found at Lys-199. 239-240 (NT) contributes to the pyridoxal 5'-phosphate binding site.

It belongs to the class-V pyridoxal-phosphate-dependent aminotransferase family. SerC subfamily. Homodimer. The cofactor is pyridoxal 5'-phosphate.

It localises to the cytoplasm. It catalyses the reaction O-phospho-L-serine + 2-oxoglutarate = 3-phosphooxypyruvate + L-glutamate. The catalysed reaction is 4-(phosphooxy)-L-threonine + 2-oxoglutarate = (R)-3-hydroxy-2-oxo-4-phosphooxybutanoate + L-glutamate. It functions in the pathway amino-acid biosynthesis; L-serine biosynthesis; L-serine from 3-phospho-D-glycerate: step 2/3. In terms of biological role, catalyzes the reversible conversion of 3-phosphohydroxypyruvate to phosphoserine and of 3-hydroxy-2-oxo-4-phosphonooxybutanoate to phosphohydroxythreonine. This chain is Phosphoserine aminotransferase, found in Streptococcus agalactiae serotype III (strain NEM316).